We begin with the raw amino-acid sequence, 657 residues long: Glycogen debranching enzyme (657 aa).

The active-site Nucleophile is the Asp336. Catalysis depends on Glu371, which acts as the Proton donor. Over residues 458–467 (NEANGEENRD) the composition is skewed to basic and acidic residues. Residues 458–479 (NEANGEENRDGTNNNYSNNHGK) are disordered.

This sequence belongs to the glycosyl hydrolase 13 family.

The catalysed reaction is Hydrolysis of (1-&gt;6)-alpha-D-glucosidic linkages to branches with degrees of polymerization of three or four glucose residues in limit dextrin.. The protein operates within glycan degradation; glycogen degradation. Functionally, removes maltotriose and maltotetraose chains that are attached by 1,6-alpha-linkage to the limit dextrin main chain, generating a debranched limit dextrin. The chain is Glycogen debranching enzyme from Escherichia coli O139:H28 (strain E24377A / ETEC).